A 248-amino-acid polypeptide reads, in one-letter code: Cytochrome c oxidase subunit 2 (248 aa).

Residues 1 to 36 are Mitochondrial intermembrane-facing; the sequence is MLFFNSILNDAPSSWALYFQDGASPSYLGVTHLNDY. The chain crosses the membrane as a helical span at residues 37–57; the sequence is LMFYLTFIFIGVIYAICKAVI. Residues 58–75 are Mitochondrial matrix-facing; it reads EYNYNSHPIAAKYTTHGS. Residues 76–100 traverse the membrane as a helical segment; it reads IVEFIWTLIPALILILVALPSFKLL. Residues 101 to 248 are Mitochondrial intermembrane-facing; sequence YLLDEVQKPS…DFLAWLEENS (148 aa). Cu cation is bound by residues His-182, Cys-217, Glu-219, Cys-221, His-225, and Met-228. Glu-219 contacts Mg(2+).

It belongs to the cytochrome c oxidase subunit 2 family. In terms of assembly, component of the cytochrome c oxidase (complex IV, CIV), a multisubunit enzyme composed of a catalytic core of 3 subunits and several supernumerary subunits. The complex exists as a monomer or a dimer and forms supercomplexes (SCs) in the inner mitochondrial membrane with ubiquinol-cytochrome c oxidoreductase (cytochrome b-c1 complex, complex III, CIII). Cu cation is required as a cofactor.

Its subcellular location is the mitochondrion inner membrane. It carries out the reaction 4 Fe(II)-[cytochrome c] + O2 + 8 H(+)(in) = 4 Fe(III)-[cytochrome c] + 2 H2O + 4 H(+)(out). In terms of biological role, component of the cytochrome c oxidase, the last enzyme in the mitochondrial electron transport chain which drives oxidative phosphorylation. The respiratory chain contains 3 multisubunit complexes succinate dehydrogenase (complex II, CII), ubiquinol-cytochrome c oxidoreductase (cytochrome b-c1 complex, complex III, CIII) and cytochrome c oxidase (complex IV, CIV), that cooperate to transfer electrons derived from NADH and succinate to molecular oxygen, creating an electrochemical gradient over the inner membrane that drives transmembrane transport and the ATP synthase. Cytochrome c oxidase is the component of the respiratory chain that catalyzes the reduction of oxygen to water. Electrons originating from reduced cytochrome c in the intermembrane space (IMS) are transferred via the dinuclear copper A center (CU(A)) of subunit 2 and heme A of subunit 1 to the active site in subunit 1, a binuclear center (BNC) formed by heme A3 and copper B (CU(B)). The BNC reduces molecular oxygen to 2 water molecules using 4 electrons from cytochrome c in the IMS and 4 protons from the mitochondrial matrix. In Schizosaccharomyces pombe (strain 972 / ATCC 24843) (Fission yeast), this protein is Cytochrome c oxidase subunit 2 (cox2).